Consider the following 148-residue polypeptide: MDVLFIALLVAPLILGQEYDHEEQLEEGDYYQVAYYYYTVTPNYDDFSVNFTVDYSVFESEDRLNRLNKEVTTTEAVETTASSYSLHTELMDPQNPVTTKPVTTEPVTTEPVTTEPQSPNQNDAMSTLQSPVSCFLLWTLLQGGVHFM.

Residues 1–16 (MDVLFIALLVAPLILG) form the signal peptide. An N-linked (GlcNAc...) asparagine glycan is attached at Asn50. The interval 91 to 125 (MDPQNPVTTKPVTTEPVTTEPVTTEPQSPNQNDAM) is disordered. Residues 96–116 (PVTTKPVTTEPVTTEPVTTEP) are compositionally biased toward low complexity.

It localises to the secreted. This is an uncharacterized protein from Mus musculus (Mouse).